A 105-amino-acid polypeptide reads, in one-letter code: Extracellular guanyl-specific ribonuclease Fl1 (105 aa).

2 disulfides stabilise this stretch: C5–C101 and C23–C82. H39 is a catalytic residue. E57 acts as the Proton acceptor in catalysis. The active-site Proton donor is the H90.

Belongs to the ribonuclease N1/T1 family.

The enzyme catalyses [RNA] containing guanosine + H2O = an [RNA fragment]-3'-guanosine-3'-phosphate + a 5'-hydroxy-ribonucleotide-3'-[RNA fragment].. This chain is Extracellular guanyl-specific ribonuclease Fl1, found in Gibberella baccata (Fusarium lateritium).